The chain runs to 574 residues: Thiol:disulfide interchange protein DsbD (574 aa).

The first 19 residues, 1–19 (MAHRILTLILLFCSAHASA), serve as a signal peptide directing secretion. The cysteines at positions 122 and 128 are disulfide-linked. The tract at residues 147–169 (VKANAATPSAATGEQTRVNSDSP) is disordered. The segment covering 152 to 169 (ATPSAATGEQTRVNSDSP) has biased composition (polar residues). The next 7 membrane-spanning stretches (helical) occupy residues 173–193 (LPFS…TPCV), 218–238 (LLAF…GLVV), 253–273 (WVLV…FGLF), 306–326 (IAGL…LLYI), 333–353 (WLGG…LILV), 367–387 (WMEQ…VFLL), and 399–419 (LWSV…LNAT). C192 and C314 form a disulfide bridge. The Thioredoxin domain occupies 430-574 (LLGAAMICAR…FATHLHNRLR (145 aa)). A disulfide bridge links C489 with C492.

It belongs to the thioredoxin family. DsbD subfamily.

It localises to the cell inner membrane. It catalyses the reaction [protein]-dithiol + NAD(+) = [protein]-disulfide + NADH + H(+). It carries out the reaction [protein]-dithiol + NADP(+) = [protein]-disulfide + NADPH + H(+). Required to facilitate the formation of correct disulfide bonds in some periplasmic proteins and for the assembly of the periplasmic c-type cytochromes. Acts by transferring electrons from cytoplasmic thioredoxin to the periplasm. This transfer involves a cascade of disulfide bond formation and reduction steps. The chain is Thiol:disulfide interchange protein DsbD from Cronobacter sakazakii (strain ATCC BAA-894) (Enterobacter sakazakii).